The chain runs to 344 residues: Methionine import ATP-binding protein MetN 1 (344 aa).

Residues 2-241 (IEIRNISQRF…PHHEVTRALI (240 aa)) form the ABC transporter domain. ATP is bound at residue 38–45 (GRSGAGKS).

It belongs to the ABC transporter superfamily. Methionine importer (TC 3.A.1.24) family. In terms of assembly, the complex is composed of two ATP-binding proteins (MetN), two transmembrane proteins (MetI) and a solute-binding protein (MetQ).

The protein resides in the cell inner membrane. The enzyme catalyses L-methionine(out) + ATP + H2O = L-methionine(in) + ADP + phosphate + H(+). The catalysed reaction is D-methionine(out) + ATP + H2O = D-methionine(in) + ADP + phosphate + H(+). Its function is as follows. Part of the ABC transporter complex MetNIQ involved in methionine import. Responsible for energy coupling to the transport system. This Paraburkholderia xenovorans (strain LB400) protein is Methionine import ATP-binding protein MetN 1.